The primary structure comprises 374 residues: Carbamoyl phosphate synthase small chain (374 aa).

The tract at residues 1 to 185 is CPSase; that stretch reads MKAILALEDG…DVSSGYKWSD (185 aa). L-glutamine is bound by residues S45, G237, and G239. The 186-residue stretch at 189-374 folds into the Glutamine amidotransferase type-1 domain; it reads RLVLVDYGVK…RNLVKDATGK (186 aa). C264 acts as the Nucleophile in catalysis. Residues L265, Q268, N306, G308, and F309 each coordinate L-glutamine. Active-site residues include H347 and E349.

The protein belongs to the CarA family. As to quaternary structure, composed of two chains; the small (or glutamine) chain promotes the hydrolysis of glutamine to ammonia, which is used by the large (or ammonia) chain to synthesize carbamoyl phosphate. Tetramer of heterodimers (alpha,beta)4.

It catalyses the reaction hydrogencarbonate + L-glutamine + 2 ATP + H2O = carbamoyl phosphate + L-glutamate + 2 ADP + phosphate + 2 H(+). The enzyme catalyses L-glutamine + H2O = L-glutamate + NH4(+). It participates in amino-acid biosynthesis; L-arginine biosynthesis; carbamoyl phosphate from bicarbonate: step 1/1. It functions in the pathway pyrimidine metabolism; UMP biosynthesis via de novo pathway; (S)-dihydroorotate from bicarbonate: step 1/3. Its function is as follows. Small subunit of the glutamine-dependent carbamoyl phosphate synthetase (CPSase). CPSase catalyzes the formation of carbamoyl phosphate from the ammonia moiety of glutamine, carbonate, and phosphate donated by ATP, constituting the first step of 2 biosynthetic pathways, one leading to arginine and/or urea and the other to pyrimidine nucleotides. The small subunit (glutamine amidotransferase) binds and cleaves glutamine to supply the large subunit with the substrate ammonia. The sequence is that of Carbamoyl phosphate synthase small chain from Maridesulfovibrio salexigens (strain ATCC 14822 / DSM 2638 / NCIMB 8403 / VKM B-1763) (Desulfovibrio salexigens).